Consider the following 71-residue polypeptide: MSDQKTAELNKMIEEISQKLNMLNIGVIKAEDFSNEKLEDLEYLHQMVMKKKSFSPSEMQAIAEELAALRK.

It belongs to the UPF0435 family.

The polypeptide is UPF0435 protein BLi00816/BL03111 (Bacillus licheniformis (strain ATCC 14580 / DSM 13 / JCM 2505 / CCUG 7422 / NBRC 12200 / NCIMB 9375 / NCTC 10341 / NRRL NRS-1264 / Gibson 46)).